A 435-amino-acid chain; its full sequence is ATP-dependent protease ATPase subunit HslU (435 aa).

ATP contacts are provided by residues Ile-18, 60-65 (GVGKTE), Asp-248, Glu-313, and Arg-385.

Belongs to the ClpX chaperone family. HslU subfamily. As to quaternary structure, a double ring-shaped homohexamer of HslV is capped on each side by a ring-shaped HslU homohexamer. The assembly of the HslU/HslV complex is dependent on binding of ATP.

Its subcellular location is the cytoplasm. In terms of biological role, ATPase subunit of a proteasome-like degradation complex; this subunit has chaperone activity. The binding of ATP and its subsequent hydrolysis by HslU are essential for unfolding of protein substrates subsequently hydrolyzed by HslV. HslU recognizes the N-terminal part of its protein substrates and unfolds these before they are guided to HslV for hydrolysis. The protein is ATP-dependent protease ATPase subunit HslU of Rhizobium leguminosarum bv. trifolii (strain WSM2304).